A 169-amino-acid chain; its full sequence is Cyclic pyranopterin monophosphate synthase (169 aa).

Residues 83 to 85 (LCH) and 121 to 122 (ME) each bind substrate. Residue Asp136 is part of the active site.

It belongs to the MoaC family. In terms of assembly, homohexamer; trimer of dimers.

The enzyme catalyses (8S)-3',8-cyclo-7,8-dihydroguanosine 5'-triphosphate = cyclic pyranopterin phosphate + diphosphate. It participates in cofactor biosynthesis; molybdopterin biosynthesis. Functionally, catalyzes the conversion of (8S)-3',8-cyclo-7,8-dihydroguanosine 5'-triphosphate to cyclic pyranopterin monophosphate (cPMP). The polypeptide is Cyclic pyranopterin monophosphate synthase (Rhodospirillum centenum (strain ATCC 51521 / SW)).